The primary structure comprises 1982 residues: CASP8-associated protein 2 (1982 aa).

A2 is subject to N-acetylalanine. The residue at position 20 (S20) is a Phosphoserine. Over residues 159–191 (VKTKDLKSRSPHLDDCSKTDHRAKSDVSKDVHH) the composition is skewed to basic and acidic residues. Residues 159-552 (VKTKDLKSRS…ESGPNETKNK (394 aa)) are disordered. Residue S194 is modified to Phosphoserine. Residues 198–210 (LEKEGKPHSDKRS) show a composition bias toward basic and acidic residues. Over residues 225–240 (GVWSRSHYQVGEGSSN) the composition is skewed to polar residues. Residues 286 to 395 (GHPEKYGKGE…ERASLPHSKN (110 aa)) show a composition bias toward basic and acidic residues. The segment covering 396-405 (EITFSHNSSK) has biased composition (polar residues). Composition is skewed to basic and acidic residues over residues 406–423 (YHLE…DKSV), 444–455 (KNIDSKEVDAMH), and 463–524 (KAER…KGEV). The residue at position 567 (S567) is a Phosphoserine. The tract at residues 569–593 (AKKQPVSQDNQHKITDIPKSSGVCD) is disordered. A phosphoserine mark is found at S658, S815, and S875. Disordered regions lie at residues 875 to 1017 (SPPQ…DKVM), 1157 to 1188 (FGRD…DNSN), and 1251 to 1283 (ERSL…HATL). Polar residues predominate over residues 894 to 904 (SAHSTSKSQSD). Composition is skewed to basic and acidic residues over residues 905–924 (LNKE…EADT), 936–965 (GEIR…DVRK), 999–1016 (KRPD…KDKV), and 1157–1170 (FGRD…EKTS). The residue at position 940 (S940) is a Phosphoserine. S1161 bears the Phosphoserine mark. Polar residues-rich tracts occupy residues 1171–1181 (KQNAQYSNSQK) and 1269–1281 (GSSI…SQHA). An N6-acetyllysine modification is found at K1343. The SUMO interaction motif 1 (SIM); mediates the binding to polysumoylated substrates motif lies at 1683 to 1687 (YVDLT). Residues 1709–1982 (DQLGCSGGNL…MKLFEKSKCR (274 aa)) are NCOA2-binding. The short motif at 1737-1741 (FIDLT) is the SUMO interaction motif 2 (SIM); mediates the binding to polysumoylated substrates element. Positions 1794-1798 (YIDLT) match the SUMO interaction motif 3 (SIM); mediates the binding to polysumoylated substrates motif. The tract at residues 1803-1909 (SSCEVKKDEL…IKDSSAALAT (107 aa)) is disordered. Over residues 1851-1865 (KETDLTNKEKTKKPT) the composition is skewed to basic and acidic residues.

Self-associates. Component of the death-inducing signaling complex (DISC) with CASP8, FADD and FAS. Interacts with NCOA2 and NCOA3. Interacts with SRRT. Interacts with TRAF2. Interacts with NPAT. Interacts (via SIM domains) with SUMO1 and SUMO2. Interacts with SP100; may negatively regulate CASP8AP2 export from the nucleus to the cytoplasm.

The protein resides in the cytoplasm. Its subcellular location is the nucleus. It localises to the PML body. It is found in the mitochondrion. Participates in TNF-alpha-induced blockade of glucocorticoid receptor (GR) transactivation at the nuclear receptor coactivator level, upstream and independently of NF-kappa-B. Suppresses both NCOA2- and NCOA3-induced enhancement of GR transactivation. Involved in TNF-alpha-induced activation of NF-kappa-B via a TRAF2-dependent pathway. Acts as a downstream mediator for CASP8-induced activation of NF-kappa-B. Required for the activation of CASP8 in FAS-mediated apoptosis. Required for histone gene transcription and progression through S phase. The polypeptide is CASP8-associated protein 2 (Homo sapiens (Human)).